The sequence spans 291 residues: tRNA U34 carboxymethyltransferase (291 aa).

Residues Lys61, Trp75, Lys80, Gly100, 122–124 (DPS), Tyr169, and Arg284 each bind carboxy-S-adenosyl-L-methionine.

It belongs to the class I-like SAM-binding methyltransferase superfamily. CmoB family. Homotetramer.

It catalyses the reaction carboxy-S-adenosyl-L-methionine + 5-hydroxyuridine(34) in tRNA = 5-carboxymethoxyuridine(34) in tRNA + S-adenosyl-L-homocysteine + H(+). Catalyzes carboxymethyl transfer from carboxy-S-adenosyl-L-methionine (Cx-SAM) to 5-hydroxyuridine (ho5U) to form 5-carboxymethoxyuridine (cmo5U) at position 34 in tRNAs. This chain is tRNA U34 carboxymethyltransferase, found in Campylobacter lari (strain RM2100 / D67 / ATCC BAA-1060).